The following is a 189-amino-acid chain: Elongation factor P (189 aa).

The protein belongs to the elongation factor P family.

The protein localises to the cytoplasm. It functions in the pathway protein biosynthesis; polypeptide chain elongation. In terms of biological role, involved in peptide bond synthesis. Stimulates efficient translation and peptide-bond synthesis on native or reconstituted 70S ribosomes in vitro. Probably functions indirectly by altering the affinity of the ribosome for aminoacyl-tRNA, thus increasing their reactivity as acceptors for peptidyl transferase. The chain is Elongation factor P from Sinorhizobium fredii (strain NBRC 101917 / NGR234).